The primary structure comprises 805 residues: Phenylalanine--tRNA ligase beta subunit (805 aa).

The 116-residue stretch at 39–154 (SEGLKKVVVG…DDATPGDPVF (116 aa)) folds into the tRNA-binding domain. The B5 domain occupies 410–485 (VQPTTVTIDL…RLYGYDNLPA (76 aa)). The Mg(2+) site is built by D463, D469, E472, and E473. The FDX-ACB domain maps to 712–805 (SKFPSITRDV…LTDELGAEIR (94 aa)).

Belongs to the phenylalanyl-tRNA synthetase beta subunit family. Type 1 subfamily. As to quaternary structure, tetramer of two alpha and two beta subunits. Mg(2+) serves as cofactor.

The protein resides in the cytoplasm. The enzyme catalyses tRNA(Phe) + L-phenylalanine + ATP = L-phenylalanyl-tRNA(Phe) + AMP + diphosphate + H(+). The sequence is that of Phenylalanine--tRNA ligase beta subunit from Lactiplantibacillus plantarum (strain ATCC BAA-793 / NCIMB 8826 / WCFS1) (Lactobacillus plantarum).